The primary structure comprises 1163 residues: Ankyrin repeat-containing protein F37A4.4 (1163 aa).

The ANK repeat unit spans residues 856 to 885; it reads YGNTALHVATRRGYQNLVEILIKHGADRSF. The region spanning 929–1025 is the BRCT domain; that stretch reads LCVPEKFPVS…KLIEKDCDYL (97 aa).

This is Ankyrin repeat-containing protein F37A4.4 from Caenorhabditis elegans.